We begin with the raw amino-acid sequence, 218 residues long: Small ribosomal subunit protein uS3 (218 aa).

Residues 38 to 106 enclose the KH type-2 domain; the sequence is IREYINKRLQ…REHINIVEIK (69 aa).

It belongs to the universal ribosomal protein uS3 family. In terms of assembly, part of the 30S ribosomal subunit. Forms a tight complex with proteins S10 and S14.

Binds the lower part of the 30S subunit head. Binds mRNA in the 70S ribosome, positioning it for translation. In Geobacillus stearothermophilus (Bacillus stearothermophilus), this protein is Small ribosomal subunit protein uS3.